The following is a 176-amino-acid chain: Peptide deformylase (176 aa).

Fe cation is bound by residues Cys-94 and His-136. Glu-137 is an active-site residue. His-140 contributes to the Fe cation binding site.

Belongs to the polypeptide deformylase family. Fe(2+) serves as cofactor.

The enzyme catalyses N-terminal N-formyl-L-methionyl-[peptide] + H2O = N-terminal L-methionyl-[peptide] + formate. Removes the formyl group from the N-terminal Met of newly synthesized proteins. Requires at least a dipeptide for an efficient rate of reaction. N-terminal L-methionine is a prerequisite for activity but the enzyme has broad specificity at other positions. The protein is Peptide deformylase of Bartonella quintana (strain Toulouse) (Rochalimaea quintana).